Consider the following 208-residue polypeptide: Ribosomal RNA large subunit methyltransferase E (208 aa).

The S-adenosyl-L-methionine site is built by G62, W64, D82, D98, and D123. Catalysis depends on K163, which acts as the Proton acceptor.

This sequence belongs to the class I-like SAM-binding methyltransferase superfamily. RNA methyltransferase RlmE family.

It is found in the cytoplasm. It catalyses the reaction uridine(2552) in 23S rRNA + S-adenosyl-L-methionine = 2'-O-methyluridine(2552) in 23S rRNA + S-adenosyl-L-homocysteine + H(+). Specifically methylates the uridine in position 2552 of 23S rRNA at the 2'-O position of the ribose in the fully assembled 50S ribosomal subunit. The protein is Ribosomal RNA large subunit methyltransferase E of Mannheimia succiniciproducens (strain KCTC 0769BP / MBEL55E).